Reading from the N-terminus, the 77-residue chain is Acyl carrier protein (77 aa).

The Carrier domain maps to 2-77; it reads SSIDKRIKEI…DAIDYITDHT (76 aa). Ser37 is subject to O-(pantetheine 4'-phosphoryl)serine.

Belongs to the acyl carrier protein (ACP) family. Post-translationally, 4'-phosphopantetheine is transferred from CoA to a specific serine of apo-ACP by AcpS. This modification is essential for activity because fatty acids are bound in thioester linkage to the sulfhydryl of the prosthetic group.

Its subcellular location is the cytoplasm. Its pathway is lipid metabolism; fatty acid biosynthesis. Functionally, carrier of the growing fatty acid chain in fatty acid biosynthesis. In Geotalea uraniireducens (strain Rf4) (Geobacter uraniireducens), this protein is Acyl carrier protein.